We begin with the raw amino-acid sequence, 64 residues long: MPKMKSHTGMGKRVRVTGKGKIVKQQAGLRHNLEKKPSTRTRRLTGLVEVAKPDVKRIKKLLGR.

Residues 1-22 (MPKMKSHTGMGKRVRVTGKGKI) are compositionally biased toward basic residues. Residues 1–39 (MPKMKSHTGMGKRVRVTGKGKIVKQQAGLRHNLEKKPST) form a disordered region.

The protein belongs to the bacterial ribosomal protein bL35 family.

This is Large ribosomal subunit protein bL35 from Salinispora arenicola (strain CNS-205).